The chain runs to 298 residues: Protease HtpX homolog (298 aa).

The next 2 membrane-spanning stretches (helical) occupy residues 14–34 (VVLL…AGYL) and 39–59 (YAMG…SMIF). His143 provides a ligand contact to Zn(2+). Glu144 is an active-site residue. His147 is a binding site for Zn(2+). 2 consecutive transmembrane segments (helical) span residues 158–178 (IAVA…RMLW) and 197–217 (IITL…ASLI). Residue Glu226 coordinates Zn(2+).

Belongs to the peptidase M48B family. Zn(2+) is required as a cofactor.

The protein localises to the cell membrane. The sequence is that of Protease HtpX homolog from Streptococcus pyogenes serotype M6 (strain ATCC BAA-946 / MGAS10394).